Consider the following 91-residue polypeptide: Large ribosomal subunit protein uL22 (91 aa).

The protein belongs to the universal ribosomal protein uL22 family. In terms of assembly, part of the 50S ribosomal subunit.

This protein binds specifically to 23S rRNA; its binding is stimulated by other ribosomal proteins, e.g. L4, L17, and L20. It is important during the early stages of 50S assembly. It makes multiple contacts with different domains of the 23S rRNA in the assembled 50S subunit and ribosome. Functionally, the globular domain of the protein is located near the polypeptide exit tunnel on the outside of the subunit, while an extended beta-hairpin is found that lines the wall of the exit tunnel in the center of the 70S ribosome. The chain is Large ribosomal subunit protein uL22 (rplV) from Pigeon pea witches'-broom phytoplasma.